The sequence spans 335 residues: Anthranilate phosphoribosyltransferase (335 aa).

5-phospho-alpha-D-ribose 1-diphosphate-binding positions include Gly-79, 82-83, Thr-87, 89-92, 107-115, and Ser-119; these read GD, NIST, and KHCNQGVSS. An anthranilate-binding site is contributed by Gly-79. Ser-91 serves as a coordination point for Mg(2+). Residue Asn-110 coordinates anthranilate. Arg-165 provides a ligand contact to anthranilate. Mg(2+)-binding residues include Asp-223 and Glu-224.

This sequence belongs to the anthranilate phosphoribosyltransferase family. As to quaternary structure, homodimer. Mg(2+) is required as a cofactor.

The enzyme catalyses N-(5-phospho-beta-D-ribosyl)anthranilate + diphosphate = 5-phospho-alpha-D-ribose 1-diphosphate + anthranilate. It participates in amino-acid biosynthesis; L-tryptophan biosynthesis; L-tryptophan from chorismate: step 2/5. In terms of biological role, catalyzes the transfer of the phosphoribosyl group of 5-phosphorylribose-1-pyrophosphate (PRPP) to anthranilate to yield N-(5'-phosphoribosyl)-anthranilate (PRA). The polypeptide is Anthranilate phosphoribosyltransferase (Buchnera aphidicola subsp. Diuraphis noxia).